The chain runs to 429 residues: Serine hydroxymethyltransferase (429 aa).

(6S)-5,6,7,8-tetrahydrofolate contacts are provided by residues Leu-127 and 131–133 (GHL). N6-(pyridoxal phosphate)lysine is present on Lys-236. Residue Glu-252 coordinates (6S)-5,6,7,8-tetrahydrofolate.

The protein belongs to the SHMT family. Homodimer. Pyridoxal 5'-phosphate is required as a cofactor.

The protein localises to the cytoplasm. It carries out the reaction (6R)-5,10-methylene-5,6,7,8-tetrahydrofolate + glycine + H2O = (6S)-5,6,7,8-tetrahydrofolate + L-serine. The protein operates within one-carbon metabolism; tetrahydrofolate interconversion. It functions in the pathway amino-acid biosynthesis; glycine biosynthesis; glycine from L-serine: step 1/1. Functionally, catalyzes the reversible interconversion of serine and glycine with tetrahydrofolate (THF) serving as the one-carbon carrier. This reaction serves as the major source of one-carbon groups required for the biosynthesis of purines, thymidylate, methionine, and other important biomolecules. Also exhibits THF-independent aldolase activity toward beta-hydroxyamino acids, producing glycine and aldehydes, via a retro-aldol mechanism. The sequence is that of Serine hydroxymethyltransferase from Rhodospirillum centenum (strain ATCC 51521 / SW).